The sequence spans 423 residues: Gamma-glutamyl phosphate reductase (423 aa).

The protein belongs to the gamma-glutamyl phosphate reductase family.

It is found in the cytoplasm. The catalysed reaction is L-glutamate 5-semialdehyde + phosphate + NADP(+) = L-glutamyl 5-phosphate + NADPH + H(+). It participates in amino-acid biosynthesis; L-proline biosynthesis; L-glutamate 5-semialdehyde from L-glutamate: step 2/2. Its function is as follows. Catalyzes the NADPH-dependent reduction of L-glutamate 5-phosphate into L-glutamate 5-semialdehyde and phosphate. The product spontaneously undergoes cyclization to form 1-pyrroline-5-carboxylate. This chain is Gamma-glutamyl phosphate reductase, found in Paramagnetospirillum magneticum (strain ATCC 700264 / AMB-1) (Magnetospirillum magneticum).